Reading from the N-terminus, the 280-residue chain is Acyl-[acyl-carrier-protein]--UDP-N-acetylglucosamine O-acyltransferase (280 aa).

It belongs to the transferase hexapeptide repeat family. LpxA subfamily. Homotrimer.

The protein resides in the cytoplasm. It carries out the reaction a (3R)-hydroxyacyl-[ACP] + UDP-N-acetyl-alpha-D-glucosamine = a UDP-3-O-[(3R)-3-hydroxyacyl]-N-acetyl-alpha-D-glucosamine + holo-[ACP]. Its pathway is glycolipid biosynthesis; lipid IV(A) biosynthesis; lipid IV(A) from (3R)-3-hydroxytetradecanoyl-[acyl-carrier-protein] and UDP-N-acetyl-alpha-D-glucosamine: step 1/6. Functionally, involved in the biosynthesis of lipid A, a phosphorylated glycolipid that anchors the lipopolysaccharide to the outer membrane of the cell. This Chlamydia muridarum (strain MoPn / Nigg) protein is Acyl-[acyl-carrier-protein]--UDP-N-acetylglucosamine O-acyltransferase.